A 207-amino-acid polypeptide reads, in one-letter code: Low-molecular weight cobalt-containing nitrile hydratase subunit alpha (207 aa).

Positions 109, 112, 113, and 114 each coordinate Co(3+).

This sequence belongs to the nitrile hydratase subunit alpha family. In terms of assembly, heterodimer of an alpha and a beta chain. Co(3+) serves as cofactor.

It catalyses the reaction an aliphatic primary amide = an aliphatic nitrile + H2O. Its function is as follows. NHase catalyzes the hydration of various nitrile compounds to the corresponding amides. In Rhodococcus rhodochrous, this protein is Low-molecular weight cobalt-containing nitrile hydratase subunit alpha.